Reading from the N-terminus, the 484-residue chain is Transcription factor TGAL4 (484 aa).

The span at 1-11 (MGEASSSSGHP) shows a compositional bias: polar residues. Disordered stretches follow at residues 1-22 (MGEA…GYGF), 84-137 (ATAA…NASS), and 155-181 (QQEQ…DPKT). The span at 123-137 (SESSSKNNSNQNASS) shows a compositional bias: low complexity. Over residues 163–173 (ATNSPTHSSKT) the composition is skewed to polar residues. Residues 178-222 (DPKTMRRLAQNREAARKSRLRKKAYIQQLESSKLKLAQMEQDIHR) form the bZIP domain. A basic motif region spans residues 180–200 (KTMRRLAQNREAARKSRLRKK). Positions 206–220 (LESSKLKLAQMEQDI) are leucine-zipper. The region spanning 241–455 (AAMFDVDYAR…RALSSLWASR (215 aa)) is the DOG1 domain.

The protein belongs to the bZIP family. As to quaternary structure, interacts with NPR1/NH1 and NPR3/NH3.

It localises to the nucleus. Functionally, transcriptional regulator involved in defense response. The chain is Transcription factor TGAL4 from Oryza sativa subsp. japonica (Rice).